Consider the following 537-residue polypeptide: Arginine--tRNA ligase (537 aa).

Positions 113–123 (ANPTGELHLGH) match the 'HIGH' region motif.

It belongs to the class-I aminoacyl-tRNA synthetase family. Monomer.

Its subcellular location is the cytoplasm. It carries out the reaction tRNA(Arg) + L-arginine + ATP = L-arginyl-tRNA(Arg) + AMP + diphosphate. The sequence is that of Arginine--tRNA ligase (argS) from Mycoplasma pneumoniae (strain ATCC 29342 / M129 / Subtype 1) (Mycoplasmoides pneumoniae).